Consider the following 221-residue polypeptide: Small ribosomal subunit protein uS3 (221 aa).

Residues 39–108 enclose the KH type-2 domain; sequence IRKFVKKRSY…NVIINIVEVK (70 aa).

It belongs to the universal ribosomal protein uS3 family. Part of the 30S ribosomal subunit. Forms a tight complex with proteins S10 and S14.

Binds the lower part of the 30S subunit head. Binds mRNA in the 70S ribosome, positioning it for translation. The chain is Small ribosomal subunit protein uS3 from Clostridium novyi (strain NT).